Reading from the N-terminus, the 1265-residue chain is Methionine synthase (1265 aa).

Residues Q19 to V338 enclose the Hcy-binding domain. Positions 260, 323, and 324 each coordinate Zn(2+). One can recognise a Pterin-binding domain in the interval F371–E632. Residues G382–R384, D449, N470, D537, N579, R585, and R591 contribute to the (6S)-5,6,7,8-tetrahydrofolate site. The B12-binding N-terminal domain maps to Q662–K759. Residues E709, G782 to D786, H785, S830, T834, and A886 contribute to the methylcob(III)alamin site. Residues Q772–E907 form the B12-binding domain. The 343-residue stretch at S923 to D1265 folds into the AdoMet activation domain. S-adenosyl-L-methionine contacts are provided by residues D974, R1172, and Y1227 to F1228. Position 1264 is a phosphothreonine (T1264).

It belongs to the vitamin-B12 dependent methionine synthase family. In terms of assembly, monomer. Dimer. Forms a multiprotein complex with MMACHC, MMADHC and MTRR. It depends on methylcob(III)alamin as a cofactor. Zn(2+) is required as a cofactor.

The protein resides in the cytoplasm. It carries out the reaction (6S)-5-methyl-5,6,7,8-tetrahydrofolate + L-homocysteine = (6S)-5,6,7,8-tetrahydrofolate + L-methionine. It functions in the pathway amino-acid biosynthesis; L-methionine biosynthesis via de novo pathway; L-methionine from L-homocysteine (MetH route): step 1/1. Catalyzes the transfer of a methyl group from methylcob(III)alamin (MeCbl) to homocysteine, yielding enzyme-bound cob(I)alamin and methionine in the cytosol. MeCbl is an active form of cobalamin (vitamin B12) used as a cofactor for methionine biosynthesis. Cob(I)alamin form is regenerated to MeCbl by a transfer of a methyl group from 5-methyltetrahydrofolate. The processing of cobalamin in the cytosol occurs in a multiprotein complex composed of at least MMACHC, MMADHC, MTRR (methionine synthase reductase) and MTR which may contribute to shuttle safely and efficiently cobalamin towards MTR in order to produce methionine. The protein is Methionine synthase (MTR) of Bos taurus (Bovine).